We begin with the raw amino-acid sequence, 229 residues long: tRNA (guanosine(18)-2'-O)-methyltransferase (229 aa).

S-adenosyl-L-methionine is bound by residues Thr-96, Ile-139, and Leu-148.

The protein belongs to the class IV-like SAM-binding methyltransferase superfamily. RNA methyltransferase TrmH family.

It catalyses the reaction guanosine(18) in tRNA + S-adenosyl-L-methionine = 2'-O-methylguanosine(18) in tRNA + S-adenosyl-L-homocysteine + H(+). Functionally, catalyzes the 2'-O methylation of guanosine at position 18 in tRNA. The protein is tRNA (guanosine(18)-2'-O)-methyltransferase of Escherichia coli O157:H7.